A 382-amino-acid polypeptide reads, in one-letter code: Histone acetyltransferase type B subunit 2 (382 aa).

WD repeat units follow at residues 98 to 138, 141 to 181, 184 to 224, 228 to 268, and 275 to 315; these read ENNA…RYSH, PHTK…TTFK, IQKD…VVSQ, ESSN…ENSG, and GHSE…EEQQ. The interval 317–321 is interaction with the histone H4 N-terminus; that stretch reads EDAED. A WD 6 repeat occupies 332 to 372; sequence GHTAGVSDLSWCPFKDWMIGSVADDNIVHLWEISKKLITNE.

It belongs to the WD repeat RBAP46/RBAP48/MSI1 family. As to quaternary structure, component of the HAT-B complex composed of at least HAT1 and HAT2. The HAT-B complex binds to histone H4 tail.

The protein localises to the cytoplasm. Its subcellular location is the nucleus. Functionally, regulatory subunit of the histone acetylase B (HAT-B) complex. The complex acetylates 'Lys-14' of histone H4 which is required for telomeric silencing. The chain is Histone acetyltransferase type B subunit 2 (HAT2) from Candida albicans (strain SC5314 / ATCC MYA-2876) (Yeast).